The sequence spans 396 residues: S-adenosylmethionine synthase 3 (396 aa).

Residue Glu13 participates in Mg(2+) binding. Position 19 (His19) interacts with ATP. Residue Glu47 coordinates K(+). Positions 60 and 103 each coordinate L-methionine. ATP contacts are provided by residues Asp171–Lys173, Ser239–Phe242, Asp250, Arg256–Lys257, Ala273, Lys277, and Lys281. Position 250 (Asp250) interacts with L-methionine. Lys281 contributes to the L-methionine binding site.

The protein belongs to the AdoMet synthase family. In terms of assembly, homotetramer. Requires Mn(2+) as cofactor. Mg(2+) is required as a cofactor. Co(2+) serves as cofactor. The cofactor is K(+). As to expression, expressed in roots, stems and leaves (at protein level).

It is found in the cytoplasm. It carries out the reaction L-methionine + ATP + H2O = S-adenosyl-L-methionine + phosphate + diphosphate. It participates in amino-acid biosynthesis; S-adenosyl-L-methionine biosynthesis; S-adenosyl-L-methionine from L-methionine: step 1/1. Functionally, catalyzes the formation of S-adenosylmethionine from methionine and ATP. The reaction comprises two steps that are both catalyzed by the same enzyme: formation of S-adenosylmethionine (AdoMet) and triphosphate, and subsequent hydrolysis of the triphosphate. May be involved in the synthesis of betain in response to abiotic stress such as high salinity. This is S-adenosylmethionine synthase 3 (SAMS3) from Atriplex nummularia (Old man saltbush).